A 426-amino-acid chain; its full sequence is Serine--tRNA ligase (426 aa).

L-serine is bound at residue 233 to 235 (TAE). 264–266 (RSE) lines the ATP pocket. Glutamate 287 contacts L-serine. An ATP-binding site is contributed by 351–354 (EISS). Position 387 (serine 387) interacts with L-serine.

It belongs to the class-II aminoacyl-tRNA synthetase family. Type-1 seryl-tRNA synthetase subfamily. In terms of assembly, homodimer. The tRNA molecule binds across the dimer.

The protein resides in the cytoplasm. The enzyme catalyses tRNA(Ser) + L-serine + ATP = L-seryl-tRNA(Ser) + AMP + diphosphate + H(+). The catalysed reaction is tRNA(Sec) + L-serine + ATP = L-seryl-tRNA(Sec) + AMP + diphosphate + H(+). It participates in aminoacyl-tRNA biosynthesis; selenocysteinyl-tRNA(Sec) biosynthesis; L-seryl-tRNA(Sec) from L-serine and tRNA(Sec): step 1/1. Its function is as follows. Catalyzes the attachment of serine to tRNA(Ser). Is also able to aminoacylate tRNA(Sec) with serine, to form the misacylated tRNA L-seryl-tRNA(Sec), which will be further converted into selenocysteinyl-tRNA(Sec). This Clostridium botulinum (strain Kyoto / Type A2) protein is Serine--tRNA ligase.